Consider the following 152-residue polypeptide: Phospholipase A2 (152 aa).

Positions 1–20 (MAACHRILLLLSVAVASGAA) are cleaved as a signal peptide. 8 cysteine pairs are disulfide-bonded: cysteine 39/cysteine 96, cysteine 53/cysteine 142, cysteine 55/cysteine 70, cysteine 69/cysteine 124, cysteine 75/cysteine 149, cysteine 76/cysteine 117, cysteine 85/cysteine 110, and cysteine 103/cysteine 115. Residues glycine 56 and glycine 58 each contribute to the Ca(2+) site. Residue histidine 73 is part of the active site. Ca(2+) is bound at residue aspartate 74. The active site involves aspartate 118.

The protein belongs to the phospholipase A2 family. As to expression, expressed by the venom gland. Heavily expressed in the venom gland transcriptome.

The protein localises to the secreted. It catalyses the reaction a 1,2-diacyl-sn-glycero-3-phosphocholine + H2O = a 1-acyl-sn-glycero-3-phosphocholine + a fatty acid + H(+). PA2 catalyzes the calcium-dependent hydrolysis of the 2-acyl groups in 3-sn-phosphoglycerides. This is Phospholipase A2 from Meiacanthus atrodorsalis (Forktail blenny).